A 207-amino-acid chain; its full sequence is Ras-related protein Rab7A (207 aa).

GTP contacts are provided by residues 15–22, 63–67, and 125–128; these read GDSGVGKT, DTAGQ, and NKID. S-geranylgeranyl cysteine attachment occurs at residues C205 and C207. C207 carries the cysteine methyl ester modification.

Belongs to the small GTPase superfamily. Rab family.

It localises to the cell membrane. Protein transport. Probably involved in vesicular traffic. This chain is Ras-related protein Rab7A, found in Mesembryanthemum crystallinum (Common ice plant).